A 323-amino-acid chain; its full sequence is Methionyl-tRNA formyltransferase (323 aa).

115 to 118 (SLLP) serves as a coordination point for (6S)-5,6,7,8-tetrahydrofolate.

This sequence belongs to the Fmt family.

It catalyses the reaction L-methionyl-tRNA(fMet) + (6R)-10-formyltetrahydrofolate = N-formyl-L-methionyl-tRNA(fMet) + (6S)-5,6,7,8-tetrahydrofolate + H(+). In terms of biological role, attaches a formyl group to the free amino group of methionyl-tRNA(fMet). The formyl group appears to play a dual role in the initiator identity of N-formylmethionyl-tRNA by promoting its recognition by IF2 and preventing the misappropriation of this tRNA by the elongation apparatus. The polypeptide is Methionyl-tRNA formyltransferase (Lactococcus lactis subsp. cremoris (strain SK11)).